A 130-amino-acid polypeptide reads, in one-letter code: Large ribosomal subunit protein bL12c (130 aa).

The protein belongs to the bacterial ribosomal protein bL12 family. Homodimer. Part of the ribosomal stalk of the 50S ribosomal subunit. Forms a multimeric L10(L12)X complex, where L10 forms an elongated spine to which 2 to 4 L12 dimers bind in a sequential fashion. Binds GTP-bound translation factors.

The protein localises to the plastid. It localises to the chloroplast. In terms of biological role, forms part of the ribosomal stalk which helps the ribosome interact with GTP-bound translation factors. Is thus essential for accurate translation. This chain is Large ribosomal subunit protein bL12c, found in Cyanidium caldarium (Red alga).